We begin with the raw amino-acid sequence, 267 residues long: Cytochrome b (267 aa).

The next 4 membrane-spanning stretches (helical) occupy residues phenylalanine 4 to alanine 24, tryptophan 48 to isoleucine 69, tryptophan 84 to leucine 104, and phenylalanine 149 to threonine 169. Histidine 54 and histidine 68 together coordinate heme b. Heme b is bound by residues histidine 153 and histidine 167. Residue histidine 172 participates in a ubiquinone binding. 2 helical membrane passes run leucine 197–alanine 217 and leucine 259–alanine 267.

The protein belongs to the cytochrome b family. In terms of assembly, the cytochrome bc1 complex contains 11 subunits: 3 respiratory subunits (MT-CYB, CYC1 and UQCRFS1), 2 core proteins (UQCRC1 and UQCRC2) and 6 low-molecular weight proteins (UQCRH/QCR6, UQCRB/QCR7, UQCRQ/QCR8, UQCR10/QCR9, UQCR11/QCR10 and a cleavage product of UQCRFS1). This cytochrome bc1 complex then forms a dimer. It depends on heme b as a cofactor.

It localises to the mitochondrion inner membrane. Its function is as follows. Component of the ubiquinol-cytochrome c reductase complex (complex III or cytochrome b-c1 complex) that is part of the mitochondrial respiratory chain. The b-c1 complex mediates electron transfer from ubiquinol to cytochrome c. Contributes to the generation of a proton gradient across the mitochondrial membrane that is then used for ATP synthesis. The polypeptide is Cytochrome b (MT-CYB) (Raphus cucullatus (Dodo)).